Here is an 84-residue protein sequence, read N- to C-terminus: U2-theraphotoxin-Cg1b 1 (84 aa).

The N-terminal stretch at 1–21 is a signal peptide; that stretch reads MKVSVLITLAVWGVMFLLTSA. A propeptide spanning residues 22-48 is cleaved from the precursor; the sequence is QERGSDQMDSPAWLKSMERIFQSEERE. 3 disulfide bridges follow: Cys49/Cys63, Cys56/Cys68, and Cys62/Cys76.

This sequence belongs to the neurotoxin 10 (Hwtx-1) family. 06 (F4b) subfamily. Expressed by the venom gland.

It localises to the secreted. In terms of biological role, probable ion channel inhibitor. In Chilobrachys guangxiensis (Chinese earth tiger tarantula), this protein is U2-theraphotoxin-Cg1b 1.